A 1662-amino-acid polypeptide reads, in one-letter code: Putative mediator of RNA polymerase II transcription subunit 23 (1662 aa).

Disordered regions lie at residues 1–24 (MYTNIPQQQQNIPQQQQQNIPQQQ), 95–139 (QQRP…QSQP), 206–252 (TTTP…STTN), and 1530–1572 (GYDD…QDTN). Residues 39 to 122 (QQQNIQQQQQ…QQSQQQQASL (84 aa)) adopt a coiled-coil conformation. Residues 95 to 124 (QQRPQTPQQNAQQQSQQSQQSQQQQASLGQ) show a composition bias toward low complexity. Over residues 1532 to 1560 (DDDDDDEDDDYYDEDDEDEDDDNEDDQQD) the composition is skewed to acidic residues.

This sequence belongs to the Mediator complex subunit 23 family. In terms of assembly, component of the Mediator complex.

Its subcellular location is the nucleus. Functionally, component of the Mediator complex, a coactivator involved in the regulated transcription of nearly all RNA polymerase II-dependent genes. Mediator functions as a bridge to convey information from gene-specific regulatory proteins to the basal RNA polymerase II transcription machinery. Mediator is recruited to promoters by direct interactions with regulatory proteins and serves as a scaffold for the assembly of a functional preinitiation complex with RNA polymerase II and the general transcription factors. This chain is Putative mediator of RNA polymerase II transcription subunit 23 (med23), found in Dictyostelium discoideum (Social amoeba).